Here is a 302-residue protein sequence, read N- to C-terminus: Glycine--tRNA ligase alpha subunit (302 aa).

This sequence belongs to the class-II aminoacyl-tRNA synthetase family. As to quaternary structure, tetramer of two alpha and two beta subunits.

It is found in the cytoplasm. It catalyses the reaction tRNA(Gly) + glycine + ATP = glycyl-tRNA(Gly) + AMP + diphosphate. The chain is Glycine--tRNA ligase alpha subunit from Baumannia cicadellinicola subsp. Homalodisca coagulata.